The chain runs to 150 residues: Ribonuclease pancreatic delta-type (150 aa).

The first 25 residues, 1 to 25 (MGLEKSFILFSLLVLVLGWVQPSLG), serve as a signal peptide directing secretion. Substrate is bound at residue arginine 35. Catalysis depends on histidine 37, which acts as the Proton acceptor. 4 disulfide bridges follow: cysteine 51–cysteine 110, cysteine 65–cysteine 121, cysteine 83–cysteine 136, and cysteine 90–cysteine 98. Residues 66–70 (KRVNT), lysine 91, and arginine 111 contribute to the substrate site. The active-site Proton donor is the histidine 145.

It belongs to the pancreatic ribonuclease family. As to quaternary structure, monomer.

It is found in the secreted. The enzyme catalyses an [RNA] containing cytidine + H2O = an [RNA]-3'-cytidine-3'-phosphate + a 5'-hydroxy-ribonucleotide-3'-[RNA].. It catalyses the reaction an [RNA] containing uridine + H2O = an [RNA]-3'-uridine-3'-phosphate + a 5'-hydroxy-ribonucleotide-3'-[RNA].. Its function is as follows. Endonuclease that catalyzes the cleavage of RNA on the 3' side of pyrimidine nucleotides. Acts on single-stranded and double-stranded RNA. The chain is Ribonuclease pancreatic delta-type (Rnase1d) from Rattus norvegicus (Rat).